A 337-amino-acid chain; its full sequence is Alanine racemase (337 aa).

Lys33 (proton acceptor; specific for D-alanine) is an active-site residue. Lys33 carries the N6-(pyridoxal phosphate)lysine modification. Arg118 contacts substrate. Tyr246 serves as the catalytic Proton acceptor; specific for L-alanine. Met292 contacts substrate.

It belongs to the alanine racemase family. Requires pyridoxal 5'-phosphate as cofactor.

It carries out the reaction L-alanine = D-alanine. It participates in amino-acid biosynthesis; D-alanine biosynthesis; D-alanine from L-alanine: step 1/1. Functionally, catalyzes the interconversion of L-alanine and D-alanine. May also act on other amino acids. This chain is Alanine racemase (alr), found in Campylobacter concisus (strain 13826).